The primary structure comprises 385 residues: Guanine nucleotide-binding protein alpha-5 subunit (385 aa).

G2 carries the N-myristoyl glycine lipid modification. The S-palmitoyl cysteine moiety is linked to residue C6. The region spanning 32–385 is the G-alpha domain; sequence RKIKMLLLGI…NKNIETLSLE (354 aa). Residues 35–48 are G1 motif; the sequence is KMLLLGISDSGKST. GTP is bound by residues 40 to 47, 174 to 180, 199 to 203, 298 to 301, and A357; these read GISDSGKS, IHMRQTT, DVGGQ, and NKID. The Mg(2+) site is built by S47 and T180. Positions 172–180 are G2 motif; that stretch reads DLIHMRQTT. The tract at residues 195–204 is G3 motif; that stretch reads IRLIDVGGQK. Residues 294 to 301 are G4 motif; the sequence is MLFLNKID. Residues 355-360 form a G5 motif region; it reads TQATIT.

This sequence belongs to the G-alpha family. In terms of assembly, g proteins are composed of 3 units; alpha, beta and gamma. The alpha chain contains the guanine nucleotide binding site.

Its function is as follows. Guanine nucleotide-binding proteins (G proteins) are involved as modulators or transducers in various transmembrane signaling systems. The chain is Guanine nucleotide-binding protein alpha-5 subunit (gpa-5) from Caenorhabditis briggsae.